Here is a 1004-residue protein sequence, read N- to C-terminus: 2-oxoglutarate dehydrogenase E1 component (1004 aa).

This sequence belongs to the alpha-ketoglutarate dehydrogenase family. As to quaternary structure, homodimer. Part of the 2-oxoglutarate dehydrogenase (OGDH) complex composed of E1 (2-oxoglutarate dehydrogenase), E2 (dihydrolipoamide succinyltransferase) and E3 (dihydrolipoamide dehydrogenase); the complex contains multiple copies of the three enzymatic components (E1, E2 and E3). Thiamine diphosphate serves as cofactor.

The enzyme catalyses N(6)-[(R)-lipoyl]-L-lysyl-[protein] + 2-oxoglutarate + H(+) = N(6)-[(R)-S(8)-succinyldihydrolipoyl]-L-lysyl-[protein] + CO2. E1 component of the 2-oxoglutarate dehydrogenase (OGDH) complex which catalyzes the decarboxylation of 2-oxoglutarate, the first step in the conversion of 2-oxoglutarate to succinyl-CoA and CO(2). The polypeptide is 2-oxoglutarate dehydrogenase E1 component (Brucella canis (strain ATCC 23365 / NCTC 10854 / RM-666)).